Reading from the N-terminus, the 627-residue chain is (R)-linalool synthase, chloroplastic (627 aa).

Residues 1–21 (MAFVSIAPLASRCCVHKSFVS) constitute a chloroplast transit peptide. Residues D378, D382, and E530 each coordinate Mg(2+). The DDXXD motif signature appears at 378 to 382 (DDIYD).

It belongs to the terpene synthase family. Tpsd subfamily. It depends on Mg(2+) as a cofactor. Mn(2+) is required as a cofactor.

It localises to the plastid. Its subcellular location is the chloroplast. The enzyme catalyses (2E)-geranyl diphosphate + H2O = (R)-linalool + diphosphate. It participates in terpene metabolism; oleoresin biosynthesis. Terpene synthase (TPS) involved in the biosynthesis of monoterpene natural products included in conifer oleoresin secretions and volatile emissions; these compounds contribute to biotic and abiotic stress defense against herbivores and pathogens. Catalyzes the conversion of (2E)-geranyl diphosphate (GPP) to (R)-linalool. The polypeptide is (R)-linalool synthase, chloroplastic (Picea glauca (White spruce)).